The following is an 80-amino-acid chain: Acyl carrier protein (80 aa).

The Carrier domain maps to 4-79 (DATLEKVRSI…DAVKYIEDKQ (76 aa)). Ser-39 carries the post-translational modification O-(pantetheine 4'-phosphoryl)serine.

It belongs to the acyl carrier protein (ACP) family. 4'-phosphopantetheine is transferred from CoA to a specific serine of apo-ACP by AcpS. This modification is essential for activity because fatty acids are bound in thioester linkage to the sulfhydryl of the prosthetic group.

The protein resides in the cytoplasm. It functions in the pathway lipid metabolism; fatty acid biosynthesis. In terms of biological role, carrier of the growing fatty acid chain in fatty acid biosynthesis. This chain is Acyl carrier protein, found in Prochlorococcus marinus (strain MIT 9211).